A 425-amino-acid chain; its full sequence is CinA-like protein (425 aa).

It belongs to the CinA family.

In Trichodesmium erythraeum (strain IMS101), this protein is CinA-like protein.